Reading from the N-terminus, the 432-residue chain is Luc7-like protein 3 (432 aa).

Met1 is modified (N-acetylmethionine). Residues Ser3, Ser110, and Ser115 each carry the phosphoserine modification. Positions 124–181 (KNEEKIQVLTDKIDVLLQQIEELGSEGKVEEAQGMMKLVEQLKEERELLRSTTSTIES) form a coiled coil. Lys231 bears the N6-acetyllysine mark. Positions 234 to 287 (LRKRTEEPDRDERLKKEKQEREEREKEREREREERERKRRREEEEREKERARDR) are enriched in basic and acidic residues. The segment at 234 to 432 (LRKRTEEPDR…IKSEGDTQSN (199 aa)) is disordered. The segment covering 288 to 301 (ERRKRSRSRSRHSS) has biased composition (basic residues). Positions 302–311 (RTSDRRCSRS) are enriched in basic and acidic residues. The segment covering 312–367 (RDHKRSRSRDRRRSRSRDRRRSRSHDRSERKHRSRSRDRRRSKSRDRKSYKHRSKS) has biased composition (basic residues). Residues 368–414 (RDREQDRKSKEKEKKGSDDKKSSVKSSSREKQSEDTNPESKESDTKN) show a composition bias toward basic and acidic residues. The residue at position 420 (Ser420) is a Phosphoserine. Positions 421-432 (EDIKSEGDTQSN) are enriched in basic and acidic residues. Residue Lys424 forms a Glycyl lysine isopeptide (Lys-Gly) (interchain with G-Cter in SUMO1); alternate linkage. Lys424 is covalently cross-linked (Glycyl lysine isopeptide (Lys-Gly) (interchain with G-Cter in SUMO2); alternate). Phosphoserine is present on residues Ser425 and Ser431.

It belongs to the Luc7 family. As to quaternary structure, may interact with SFRS1 and form homodimers. Interacts with JMJD6. Interacts with RBM25. Interacts with RSRC1 (via Arg/Ser-rich domain). Interacts with RRP1B.

Its subcellular location is the nucleus speckle. Functionally, binds cAMP regulatory element DNA sequence. May play a role in RNA splicing. The polypeptide is Luc7-like protein 3 (Luc7l3) (Mus musculus (Mouse)).